A 239-amino-acid chain; its full sequence is MAHITRFETPWFLVISKKQYKWTVRPNAGPHPIEKSIPLAVVIRDYLKLAETVREAKHIIFDGKVLVDGKVRKDYKYPVGLMDIVSIPSADLYFRVIPDNVRFMRLSKISADEAHYKYVRIMNKTTVKGGSIQLNLEDGRNILVDKETAKSFKTLMTLKIELPSQNIVDSFIISEGSYAIFVGGKNVGIHGVVKNINLSKFKSRKYSVITLESKDGNTYQTNLMNVMSIGREKSDMRVD.

Residues 37–99 (IPLAVVIRDY…ADLYFRVIPD (63 aa)) enclose the S4 RNA-binding domain.

The protein belongs to the eukaryotic ribosomal protein eS4 family.

The chain is Small ribosomal subunit protein eS4 from Saccharolobus islandicus (strain Y.N.15.51 / Yellowstone #2) (Sulfolobus islandicus).